We begin with the raw amino-acid sequence, 551 residues long: Putative transport protein CGSHiGG_02670 (551 aa).

Transmembrane regions (helical) follow at residues 4–24 (IAIT…IGHW), 28–48 (GVGL…HFTN), 65–85 (FGLI…FFSS), 95–115 (AFAI…HKIA), and 157–177 (VSYA…MWLI). RCK C-terminal domains are found at residues 191-275 (RFNA…IIGH) and 277-360 (VDAP…VIGN). Transmembrane regions (helical) follow at residues 370-390 (MLPV…PFYI), 402-424 (AGGP…LYWF), 438-458 (IVLF…DTLV), 463-483 (LEWM…VGTI), 492-512 (YLTI…LAFA), and 529-549 (VYPL…VLLW).

Belongs to the AAE transporter (TC 2.A.81) family. YidE subfamily.

Its subcellular location is the cell membrane. The sequence is that of Putative transport protein CGSHiGG_02670 from Haemophilus influenzae (strain PittGG).